The following is a 160-amino-acid chain: Phosphopantetheine adenylyltransferase (160 aa).

T9 contacts substrate. ATP-binding positions include 9-10 (TF) and H17. 3 residues coordinate substrate: K41, L73, and R87. Residues 88 to 90 (GLR), E98, and 123 to 129 (YSFLSSS) contribute to the ATP site.

This sequence belongs to the bacterial CoaD family. Homohexamer. The cofactor is Mg(2+).

Its subcellular location is the cytoplasm. The enzyme catalyses (R)-4'-phosphopantetheine + ATP + H(+) = 3'-dephospho-CoA + diphosphate. Its pathway is cofactor biosynthesis; coenzyme A biosynthesis; CoA from (R)-pantothenate: step 4/5. Reversibly transfers an adenylyl group from ATP to 4'-phosphopantetheine, yielding dephospho-CoA (dPCoA) and pyrophosphate. This Moorella thermoacetica (strain ATCC 39073 / JCM 9320) protein is Phosphopantetheine adenylyltransferase.